Reading from the N-terminus, the 559-residue chain is AIVSLVKSDQICIGYHANNSTEQVDTIMEKNVTVTHAQDILEKTHNGKLCDLDGVKPLILRDCSVAGWLLGNPMCDEFINVPEWSYIVEKASPANDLCYPGDFNDYEELKHLLSGINHFDKIHIIPKSSWSNHEASSWVSSACPYQGKSSFFRNVVWLIKKNSSYPTIKRSYDNTNQEDLLVLWGIHHPNDAAEQTRFYQNPTTYIGVGTSTLNQRLVPKIATTSKVDGQSGRMEFFWTILKPNDAINFESNGNFIAPEYAYKIVKKGDSAIMKSELEYGNCNTKCQTPMGAINSSMPFHNIHPLTIGECPKYVKSNRLVLATGLRNSPQRERRRKKRGLFGAIAGFIEGGWQGMVDGWYGYHHSNEQGSGYAADKESTQKAIDGVTNKVNSIIDKMNTQFEAVGREFNNLERRIENLNKKMEDGFLDVWTYNAELLVLMENERTLDFHDSNVKNLYDKVRLQLRDNAKELGNGCFEFYHKCDNECMESVRNGTYDYPQYSEEARLKREEISGVKLESIGTYQILSIYSTVASSLALAIMVAGLSLWMCSNGSLQCRIC.

The Extracellular segment spans residues 1 to 523 (AIVSLVKSDQ…VKLESIGTYQ (523 aa)). Disulfide bonds link cysteine 12–cysteine 475, cysteine 50–cysteine 282, cysteine 63–cysteine 75, cysteine 98–cysteine 143, cysteine 286–cysteine 310, and cysteine 482–cysteine 486. N-linked (GlcNAc...) asparagine; by host glycosylation is found at asparagine 18, asparagine 19, and asparagine 31. Asparagine 162 and asparagine 294 each carry an N-linked (GlcNAc...) asparagine; by host glycan. N-linked (GlcNAc...) asparagine; by host glycosylation occurs at asparagine 492. A helical transmembrane segment spans residues 524–544 (ILSIYSTVASSLALAIMVAGL). Topologically, residues 545–559 (SLWMCSNGSLQCRIC) are cytoplasmic. Residues cysteine 549, cysteine 556, and cysteine 559 are each lipidated (S-palmitoyl cysteine; by host).

It belongs to the influenza viruses hemagglutinin family. In terms of assembly, homotrimer of disulfide-linked HA1-HA2. Post-translationally, palmitoylated. In natural infection, inactive HA is matured into HA1 and HA2 outside the cell by one or more trypsin-like, arginine-specific endoprotease secreted by the bronchial epithelial cells. One identified protease that may be involved in this process is secreted in lungs by club cells.

The protein resides in the virion membrane. The protein localises to the host apical cell membrane. Functionally, binds to sialic acid-containing receptors on the cell surface, bringing about the attachment of the virus particle to the cell. This attachment induces virion internalization either through clathrin-dependent endocytosis or through clathrin- and caveolin-independent pathway. Plays a major role in the determination of host range restriction and virulence. Class I viral fusion protein. Responsible for penetration of the virus into the cell cytoplasm by mediating the fusion of the membrane of the endocytosed virus particle with the endosomal membrane. Low pH in endosomes induces an irreversible conformational change in HA2, releasing the fusion hydrophobic peptide. Several trimers are required to form a competent fusion pore. The protein is Hemagglutinin of Aves (Cat).